A 219-amino-acid chain; its full sequence is 2-phospho-L-lactate guanylyltransferase (219 aa).

It belongs to the CofC family. In terms of assembly, homodimer.

It catalyses the reaction (2S)-2-phospholactate + GTP + H(+) = (2S)-lactyl-2-diphospho-5'-guanosine + diphosphate. The protein operates within cofactor biosynthesis; coenzyme F420 biosynthesis. Its function is as follows. Guanylyltransferase that catalyzes the activation of (2S)-2-phospholactate (2-PL) as (2S)-lactyl-2-diphospho-5'-guanosine, via the condensation of 2-PL with GTP. It is involved in the biosynthesis of coenzyme F420, a hydride carrier cofactor. This is 2-phospho-L-lactate guanylyltransferase from Methanocaldococcus vulcanius (strain ATCC 700851 / DSM 12094 / M7) (Methanococcus vulcanius).